Here is a 240-residue protein sequence, read N- to C-terminus: Predicted GPI-anchored protein 58 (240 aa).

Positions 1–18 are cleaved as a signal peptide; the sequence is MQFSTLVSLAAVIVSTNA. Positions 41–216 are disordered; it reads HTNCPASSPA…NSTGPSSVPT (176 aa). A compositionally biased stretch (pro residues) spans 51-86; the sequence is TPAPAPSASAPAPPAPEQPEPSAPAPAPSAPAPEQP. Residues 87 to 103 show a composition bias toward low complexity; the sequence is EQPATPATPAAPATPAT. Pro residues-rich tracts occupy residues 104–137 and 153–192; these read PAAP…PEQP and APAP…PAPS. The span at 193–216 shows a compositional bias: low complexity; the sequence is APASVPEQPASSVSNSTGPSSVPT. An N-linked (GlcNAc...) asparagine glycan is attached at asparagine 207. Glycine 219 is lipidated: GPI-anchor amidated glycine. A propeptide spans 220-240 (removed in mature form); that stretch reads AAAKQYITGSVAVIAAALLAL.

Its subcellular location is the cell membrane. The chain is Predicted GPI-anchored protein 58 (PGA58) from Candida albicans (strain SC5314 / ATCC MYA-2876) (Yeast).